The chain runs to 281 residues: Bifunctional protein FolD (281 aa).

Residues 159–161 (NRS), S184, and I225 contribute to the NADP(+) site.

It belongs to the tetrahydrofolate dehydrogenase/cyclohydrolase family. As to quaternary structure, homodimer.

It catalyses the reaction (6R)-5,10-methylene-5,6,7,8-tetrahydrofolate + NADP(+) = (6R)-5,10-methenyltetrahydrofolate + NADPH. The enzyme catalyses (6R)-5,10-methenyltetrahydrofolate + H2O = (6R)-10-formyltetrahydrofolate + H(+). It functions in the pathway one-carbon metabolism; tetrahydrofolate interconversion. Functionally, catalyzes the oxidation of 5,10-methylenetetrahydrofolate to 5,10-methenyltetrahydrofolate and then the hydrolysis of 5,10-methenyltetrahydrofolate to 10-formyltetrahydrofolate. This is Bifunctional protein FolD from Thermoplasma volcanium (strain ATCC 51530 / DSM 4299 / JCM 9571 / NBRC 15438 / GSS1).